A 226-amino-acid polypeptide reads, in one-letter code: MPGGPGVLQALPATIFLLFLLSAVYLGPGCQALWMHKVPASLMVSLGEDAHFQCPHNSSNNANVTWWRVLHGNYTWPPEFLGPGEDPNGTLIIQNVNKSHGGIYVCRVQEGNESYQQSCGTYLRVRQPPPRPFLDMGEGTKNRIITAEGIILLFCAVVPGTLLLFRKRWQNEKLGLDAGDEYEDENLYEGLNLDDCSMYEDISRGLQGTYQDVGSLNIGDVQLEKP.

The N-terminal stretch at 1–32 (MPGGPGVLQALPATIFLLFLLSAVYLGPGCQA) is a signal peptide. The region spanning 33-116 (LWMHKVPASL…RVQEGNESYQ (84 aa)) is the Ig-like C2-type domain. At 33-143 (LWMHKVPASL…LDMGEGTKNR (111 aa)) the chain is on the extracellular side. Cys54 and Cys106 form a disulfide bridge. N-linked (GlcNAc...) asparagine glycosylation is found at Asn57, Asn63, Asn73, Asn88, Asn97, and Asn112. A helical membrane pass occupies residues 144–165 (IITAEGIILLFCAVVPGTLLLF). The Cytoplasmic segment spans residues 166-226 (RKRWQNEKLG…NIGDVQLEKP (61 aa)). In terms of domain architecture, ITAM spans 177–205 (DAGDEYEDENLYEGLNLDDCSMYEDISRG). Tyr188 and Tyr199 each carry phosphotyrosine; by SRC-type Tyr-kinases. Position 204 is an asymmetric dimethylarginine; by PRMT1 (Arg204). At Tyr210 the chain carries Phosphotyrosine; by Tyr-kinases.

As to quaternary structure, heterodimer of alpha and beta chains; disulfide-linked. Part of the B-cell antigen receptor complex where the alpha/beta chain heterodimer is non-covalently associated with an antigen-specific membrane-bound surface immunoglobulin of two heavy chains and two light chains. Interacts through its phosphorylated ITAM domain with the SH2 domains of SYK which stimulates SYK autophosphorylation and activation. Also interacts, when phosphorylated on Tyr-210, with the SH2 domain of BLNK/SLP65, bringing BLNK into proximity with SYK and allowing SYK to phosphorylate BLNK which is necessary for trafficking of the BCR to late endosomes. Interacts with Src-family tyrosine kinases including FYN and LYN, increasing their activity. Phosphorylated on tyrosine, serine and threonine residues upon B-cell activation. Phosphorylation of tyrosine residues by Src-family kinases is an early and essential feature of the BCR signaling cascade. The phosphorylated tyrosines serve as docking sites for SH2-domain containing kinases, leading to their activation which in turn leads to phosphorylation of downstream targets. Phosphorylated by LYN. Phosphorylation of serine and threonine residues may prevent subsequent tyrosine phosphorylation. Post-translationally, arginine methylation in the ITAM domain may interfere with the binding of SYK. It promotes signals leading to B-cell differentiation. In terms of tissue distribution, B-cells.

It localises to the cell membrane. In terms of biological role, required in cooperation with CD79B for initiation of the signal transduction cascade activated by binding of antigen to the B-cell antigen receptor complex (BCR) which leads to internalization of the complex, trafficking to late endosomes and antigen presentation. Also required for BCR surface expression and for efficient differentiation of pro- and pre-B-cells. Stimulates SYK autophosphorylation and activation. Binds to BLNK, bringing BLNK into proximity with SYK and allowing SYK to phosphorylate BLNK. Also interacts with and increases activity of some Src-family tyrosine kinases. Represses BCR signaling during development of immature B-cells. The protein is B-cell antigen receptor complex-associated protein alpha chain (CD79A) of Homo sapiens (Human).